The primary structure comprises 513 residues: HTH-type transcriptional regulatory protein TyrR (513 aa).

In terms of domain architecture, ACT spans 2–72 (RLEVFCEDRL…GVTDVRTVPW (71 aa)). Positions 78-114 (EHLALSALLEALPEPVLSVDMKSKVDMANPASCQLFG) constitute a PAS domain. The region spanning 206–428 (IVAVSPKMKH…LKNAIYRALT (223 aa)) is the Sigma-54 factor interaction domain. ATP-binding positions include 234–241 (GDTGTGKD) and 290–299 (ANGGSVLLDE). The H-T-H motif DNA-binding region spans 482–502 (STRKLAKRLGVSHTAIANKLR).

In terms of assembly, homodimer. In presence of tyrosine (or high concentrations of phenylalanine or tryptophan) and ATP, it self-associates to form an hexamer. At low tyrosine concentrations, homodimers can bind to certain recognition sequences referred to as 'strong TyrR boxes'. Homohexamers are the active repressing species, interacting with two or three tyrR boxes in the targeted regulatory DNA, including 'strong TyrR boxes' and lower-affinity sites called 'weak TyrR boxes'.

The protein localises to the cytoplasm. Its activity is regulated as follows. Binding of ATP strongly enhances the affinity of TyrR for tyrosine. In terms of biological role, dual transcriptional regulator of the TyrR regulon, which includes a number of genes coding for proteins involved in the biosynthesis or transport of the three aromatic amino acids, phenylalanine, tyrosine and tryptophan. These three aromatic amino acids act as effectors which bind to the TyrR protein to form an active regulatory protein. Modulates the expression of at least eight unlinked transcription units, including aroF, aroG, aroLM, aroP, mtr, tyrA, tyrB and tyrP. In most cases TyrR acts as a repressor, but positive effects have been observed on the tyrP gene, which is repressed in the presence of tyrosine and activated at high phenylalanine concentrations. Is also involved in activation, but not repression, of mtr expression in association with phenylalanine or tyrosine. Acts by binding specifically to TyrR boxes in the promoter region of the target genes. In Escherichia coli (strain K12), this protein is HTH-type transcriptional regulatory protein TyrR.